The following is a 744-amino-acid chain: Vesicle-fusing ATPase (744 aa).

Residue Lys105 is modified to N6-acetyllysine. Phosphoserine is present on Ser207. Tyr259 carries the phosphotyrosine modification. ATP contacts are provided by residues 505 to 510 (NGIIKW) and 545 to 552 (PHSGKTAL). Residue Thr550 coordinates Mg(2+). Ser569 is subject to Phosphoserine; by CDK16.

It belongs to the AAA ATPase family. As to quaternary structure, homohexamer. Interacts with GABARAP and GABARAPL2. Interacts with GRIA2. Interacts with PLK2, leading to disrupt the interaction with GRIA2. Interacts with MUSK; may regulate MUSK endocytosis and activity. Interacts with CDK16. Mg(2+) serves as cofactor. Post-translationally, phosphorylation at Ser-569 interferes with homohexamerization. In terms of tissue distribution, detected in brain (at protein level).

Its subcellular location is the cytoplasm. It catalyses the reaction ATP + H2O = ADP + phosphate + H(+). Its function is as follows. Required for vesicle-mediated transport. Catalyzes the fusion of transport vesicles within the Golgi cisternae. Is also required for transport from the endoplasmic reticulum to the Golgi stack. Seems to function as a fusion protein required for the delivery of cargo proteins to all compartments of the Golgi stack independent of vesicle origin. Interaction with AMPAR subunit GRIA2 leads to influence GRIA2 membrane cycling. The polypeptide is Vesicle-fusing ATPase (Nsf) (Rattus norvegicus (Rat)).